The chain runs to 122 residues: Large ribosomal subunit protein uL18 (122 aa).

This sequence belongs to the universal ribosomal protein uL18 family. As to quaternary structure, part of the 50S ribosomal subunit; part of the 5S rRNA/L5/L18/L25 subcomplex. Contacts the 5S and 23S rRNAs.

In terms of biological role, this is one of the proteins that bind and probably mediate the attachment of the 5S RNA into the large ribosomal subunit, where it forms part of the central protuberance. This is Large ribosomal subunit protein uL18 from Thermotoga petrophila (strain ATCC BAA-488 / DSM 13995 / JCM 10881 / RKU-1).